A 181-amino-acid chain; its full sequence is Oligoribonuclease (181 aa).

The 164-residue stretch at 8–171 (LVWIDMEMTG…DDIRESIAEL (164 aa)) folds into the Exonuclease domain. Residue Tyr129 is part of the active site.

The protein belongs to the oligoribonuclease family.

The protein localises to the cytoplasm. 3'-to-5' exoribonuclease specific for small oligoribonucleotides. This Pseudoalteromonas atlantica (strain T6c / ATCC BAA-1087) protein is Oligoribonuclease.